Consider the following 723-residue polypeptide: E3 ubiquitin-protein ligase LRSAM1 (723 aa).

LRR repeat units follow at residues 30 to 51 (ADDILDISKCELSEIPFGAFAT), 56 to 77 (QKKVLIVHTNHLTSLLPKSCSL), 82 to 103 (TIKVLDLHDNQLTALPDDLGQL), 105 to 127 (ALQVLNVERNQLMQLPRSIGNLT), 128 to 149 (QLQTLNVKDNKLKELPDTVGEL), and 151 to 172 (SLRTLNISGNEIQRLPQMLAHV). Residue Ser-234 is modified to Phosphoserine. 2 coiled-coil regions span residues 254–380 (SDYE…TESL) and 510–562 (ALSS…KPLS). The interval 282–314 (TQLLQQSSSQKDEILQTVKEEQSRLEQGLSEHQ) is disordered. The segment covering 291-314 (QKDEILQTVKEEQSRLEQGLSEHQ) has biased composition (basic and acidic residues). The SAM domain maps to 569–632 (GMERQLVALL…LRRVQELLDA (64 aa)). Residue Ser-604 is modified to Phosphoserine. The disordered stretch occupies residues 642–665 (PMGEVVTPTAPQEPPESVRPSAPP). 2 consecutive short sequence motifs (PTAP motif) follow at residues 649–652 (PTAP) and 661–664 (PSAP). The RING-type zinc finger occupies 675–710 (CVVCLEREAQMIFLNCGHVCCCQQCCQPLRTCPLCR).

In terms of assembly, interacts with TSG101. Interacts with PHF23. Interacts with FUS. Ubiquitination promoted by PHF23 leads to proteasomal degradation. As to expression, highly expressed in adult spinal cord motoneurons as well as in fetal spinal cord and muscle tissue.

It localises to the cytoplasm. The catalysed reaction is S-ubiquitinyl-[E2 ubiquitin-conjugating enzyme]-L-cysteine + [acceptor protein]-L-lysine = [E2 ubiquitin-conjugating enzyme]-L-cysteine + N(6)-ubiquitinyl-[acceptor protein]-L-lysine.. Its pathway is protein modification; protein ubiquitination. Its function is as follows. E3 ubiquitin-protein ligase that mediates monoubiquitination of TSG101 at multiple sites, leading to inactivate the ability of TSG101 to sort endocytic (EGF receptors) and exocytic (HIV-1 viral proteins) cargos. Bacterial recognition protein that defends the cytoplasm from invasive pathogens. Localizes to several intracellular bacterial pathogens and generates the bacteria-associated ubiquitin signal leading to autophagy-mediated intracellular bacteria degradation (xenophagy). This is E3 ubiquitin-protein ligase LRSAM1 from Homo sapiens (Human).